Reading from the N-terminus, the 197-residue chain is Elongation factor Ts (197 aa).

Residues 81–84 are involved in Mg(2+) ion dislocation from EF-Tu; it reads TDFV.

Belongs to the EF-Ts family.

It is found in the cytoplasm. Its function is as follows. Associates with the EF-Tu.GDP complex and induces the exchange of GDP to GTP. It remains bound to the aminoacyl-tRNA.EF-Tu.GTP complex up to the GTP hydrolysis stage on the ribosome. The sequence is that of Elongation factor Ts from Sulfurihydrogenibium sp. (strain YO3AOP1).